A 1025-amino-acid polypeptide reads, in one-letter code: Leucyl-cystinyl aminopeptidase (1025 aa).

An N-acetylmethionine modification is found at M1. The Cytoplasmic portion of the chain corresponds to 1–110 (MEPFTNDRLQ…GACSVPSART (110 aa)). The Dileucine internalization motif motif lies at 53 to 54 (LL). A Phosphotyrosine modification is found at Y70. A Dileucine internalization motif motif is present at residues 76–77 (LL). Phosphoserine occurs at positions 80 and 91. Residues 96–101 (RQSPDG) are tankyrase binding. Residues 111-131 (MVVCAFVIVVAVSVIMVIYLL) form a helical; Signal-anchor for type II membrane protein membrane-spanning segment. Over 132–1025 (PRCTFTKEGC…KNLKSLTWWL (894 aa)) the chain is Extracellular. 5 N-linked (GlcNAc...) asparagine glycosylation sites follow: N145, N184, N215, N256, and N266. E295 contributes to the substrate binding site. N368 and N374 each carry an N-linked (GlcNAc...) asparagine glycan. 428–432 (GAMEN) provides a ligand contact to substrate. Residue N448 is glycosylated (N-linked (GlcNAc...) asparagine). H464 is a Zn(2+) binding site. The active-site Proton acceptor is the E465. Positions 468 and 487 each coordinate Zn(2+). 9 N-linked (GlcNAc...) asparagine glycosylation sites follow: N525, N578, N598, N664, N682, N760, N834, N850, and N989.

It belongs to the peptidase M1 family. Homodimer. Binds tankyrases 1 and 2. Zn(2+) is required as a cofactor. In terms of processing, the pregnancy serum form is derived from the membrane-bound form by proteolytic processing. Post-translationally, N-glycosylated. In terms of tissue distribution, highly expressed in placenta, heart, kidney and small intestine. Detected at lower levels in neuronal cells in the brain, in skeletal muscle, spleen, liver, testes and colon.

It is found in the cell membrane. The protein localises to the secreted. It carries out the reaction Release of an N-terminal amino acid, Cys-|-Xaa-, in which the half-cystine residue is involved in a disulfide loop, notably in oxytocin or vasopressin. Hydrolysis rates on a range of aminoacyl arylamides exceed that for the cystinyl derivative, however.. Functionally, release of an N-terminal amino acid, cleaves before cysteine, leucine as well as other amino acids. Degrades peptide hormones such as oxytocin, vasopressin and angiotensin III, and plays a role in maintaining homeostasis during pregnancy. May be involved in the inactivation of neuronal peptides in the brain. Cleaves Met-enkephalin and dynorphin. Binds angiotensin IV and may be the angiotensin IV receptor in the brain. In Homo sapiens (Human), this protein is Leucyl-cystinyl aminopeptidase (LNPEP).